The following is a 383-amino-acid chain: Opsin Rh4 (383 aa).

The Extracellular segment spans residues 1–57 (MDIAGSLCNASEGPVLRPEARVSGNGDLQFLGWNVPPDQIQHIPEHWLTQLEPPASM). N-linked (GlcNAc...) asparagine glycosylation occurs at asparagine 9. The chain crosses the membrane as a helical span at residues 58–82 (HYMLGVFYIFLFCASTVGNGMVIWI). Residues 83–94 (FSTSKALRTPSN) are Cytoplasmic-facing. The chain crosses the membrane as a helical span at residues 95–117 (MFVLNLAVFDFIMCLKAPIFIYN). Residues 118-133 (SFHRGFALGNTGCQIF) are Extracellular-facing. Residues cysteine 130 and cysteine 207 are joined by a disulfide bond. The chain crosses the membrane as a helical span at residues 134-153 (AAIGSYSGIGAGMTNAAIGY). The Cytoplasmic segment spans residues 154 to 171 (DRLNVITKPMNRNMTFTK). Residues 172–196 (AIIMNVIIWLYCTPWVVLPLTQFWD) form a helical membrane-spanning segment. At 197–220 (RFVPEGYLTSCTFDYLTDNFDTRL) the chain is on the extracellular side. Residues 221-248 (FVGTIFFFSFVCPTLMIIYYYSQIVGHV) form a helical membrane-spanning segment. At 249–284 (FSHEKALREQAKKMNVESLRSNVDKSKDTAEIRIAK) the chain is on the cytoplasmic side. Residues 285 to 308 (AAITICFLFFVSWTPYGVMSLIGA) traverse the membrane as a helical segment. At 309 to 316 (FGDKSLLT) the chain is on the extracellular side. Residues 317 to 341 (PGATMIPACTCKLVACIDPFVYAIS) traverse the membrane as a helical segment. At lysine 328 the chain carries N6-(retinylidene)lysine. At 342–383 (HPRYRMELQKRCPWLAIDEKAPESSSAASTTTTQEQQQTTAA) the chain is on the cytoplasmic side. The segment at 361–383 (KAPESSSAASTTTTQEQQQTTAA) is disordered. A compositionally biased stretch (low complexity) spans 364–383 (ESSSAASTTTTQEQQQTTAA).

This sequence belongs to the G-protein coupled receptor 1 family. Opsin subfamily. Phosphorylated on some or all of the serine and threonine residues present in the C-terminal region.

The protein resides in the membrane. Its function is as follows. Visual pigments are the light-absorbing molecules that mediate vision. They consist of an apoprotein, opsin, covalently linked to cis-retinal. This chain is Opsin Rh4 (Rh4), found in Drosophila virilis (Fruit fly).